The sequence spans 751 residues: Catalase-peroxidase 1 (751 aa).

Positions 1–11 are enriched in basic and acidic residues; the sequence is MTDKQHTRSVS. Residues 1–31 form a disordered region; the sequence is MTDKQHTRSVSESENPAIPSPTPKVSRPRRN. The tryptophyl-tyrosyl-methioninium (Trp-Tyr) (with M-251) cross-link spans 103–225; it reads WHAAGTYRIA…LANVQMGLIY (123 aa). The active-site Proton acceptor is the histidine 104. Positions 225–251 form a cross-link, tryptophyl-tyrosyl-methioninium (Tyr-Met) (with W-103); that stretch reads YVNPEGPGGNPDPLAAARDIRETFARM. Histidine 266 lines the heme b pocket. Residues 345–375 form a disordered region; the sequence is AGAKQWKPKNPEANDTVPDAHGASRRHSPTM.

It belongs to the peroxidase family. Peroxidase/catalase subfamily. In terms of assembly, homodimer or homotetramer. Heme b is required as a cofactor. In terms of processing, formation of the three residue Trp-Tyr-Met cross-link is important for the catalase, but not the peroxidase activity of the enzyme.

The enzyme catalyses H2O2 + AH2 = A + 2 H2O. It catalyses the reaction 2 H2O2 = O2 + 2 H2O. Bifunctional enzyme with both catalase and broad-spectrum peroxidase activity. In Cupriavidus pinatubonensis (strain JMP 134 / LMG 1197) (Cupriavidus necator (strain JMP 134)), this protein is Catalase-peroxidase 1.